We begin with the raw amino-acid sequence, 289 residues long: Delta-sarcoglycan (289 aa).

The Cytoplasmic segment spans residues 1-35; the sequence is MPQEQYTHHRSTMPGSVGPQVYKVGIYGWRKRCLY. The chain crosses the membrane as a helical; Signal-anchor for type II membrane protein span at residues 36–56; sequence FFVLLLMILILVNLAMTIWIL. Residues 57 to 289 are Extracellular-facing; the sequence is KVMNFTIDGM…TCQINTSVCL (233 aa). Asparagine 60 and asparagine 108 each carry an N-linked (GlcNAc...) asparagine glycan. 2 disulfides stabilise this stretch: cysteine 263/cysteine 288 and cysteine 265/cysteine 281. A glycan (N-linked (GlcNAc...) asparagine) is linked at asparagine 284.

It belongs to the sarcoglycan beta/delta/gamma/zeta family. Interacts with FLNC and DAG1. Cross-link to form 2 major subcomplexes: one consisting of SGCB, SGCD and SGCG and the other consisting of SGCB and SGCD. The association between SGCB and SGCG is particularly strong while SGCA is loosely associated with the other sarcoglycans. In terms of processing, glycosylated. Post-translationally, disulfide bonds are present. Most strongly expressed in skeletal and cardiac muscle. Also detected in smooth muscle. Weak expression in brain and lung.

It is found in the cell membrane. Its subcellular location is the sarcolemma. It localises to the cytoplasm. The protein localises to the cytoskeleton. Functionally, component of the sarcoglycan complex, a subcomplex of the dystrophin-glycoprotein complex which forms a link between the F-actin cytoskeleton and the extracellular matrix. The protein is Delta-sarcoglycan (SGCD) of Homo sapiens (Human).